The following is an 831-amino-acid chain: AdoMet-dependent rRNA methyltransferase SPB1 (831 aa).

G58, W60, D78, D94, and D119 together coordinate S-adenosyl-L-methionine. K159 (proton acceptor) is an active-site residue. 2 coiled-coil regions span residues 346–389 (LTED…QMNM) and 440–479 (NDINFDEEADANSEDEIDELEAQLDDMYNSYQNRRAERDA). Disordered regions lie at residues 492 to 535 (DEGW…ADQR) and 565 to 645 (MNKK…DQQS). The segment covering 499 to 510 (ESDKEGSDKETE) has biased composition (basic and acidic residues). 3 stretches are compositionally biased toward acidic residues: residues 511–526 (ANDYEMESESDSDDDE), 594–611 (MEVDSSDSENDVSDDSDF), and 618–631 (PDEELSDSDSDNEN). Basic and acidic residues predominate over residues 632-645 (DVSRKYSKAKDQQS). The stretch at 729 to 782 (LEAQGRKKLRALKRLEKLKKKSDMINEDSAKSERDKADEIQKLMKKLTKKQKTK) forms a coiled coil.

The protein belongs to the class I-like SAM-binding methyltransferase superfamily. RNA methyltransferase RlmE family. SPB1 subfamily. In terms of assembly, component of the nucleolar and nucleoplasmic pre-60S ribosomal particle.

Its subcellular location is the nucleus. It is found in the nucleolus. It catalyses the reaction a ribonucleotide in rRNA + S-adenosyl-L-methionine = a 2'-O-methylribonucleotide in rRNA + S-adenosyl-L-homocysteine + H(+). Functionally, required for proper assembly of pre-ribosomal particles during the biogenesis of the 60S ribosomal subunit. This is AdoMet-dependent rRNA methyltransferase SPB1 from Debaryomyces hansenii (strain ATCC 36239 / CBS 767 / BCRC 21394 / JCM 1990 / NBRC 0083 / IGC 2968) (Yeast).